The sequence spans 179 residues: Inner membrane-spanning protein YciB (179 aa).

5 helical membrane-spanning segments follow: residues 22–42 (IYAATTALIVATAIVLIYSWV), 50–70 (MALITFVLVVVFGGLTLFFHN), 76–96 (WKVTVIYALFAGALLVSQWVM), 121–141 (LAWAVFFILCGLANIYIAFWL), and 149–169 (FKVFGLTALTLIFTLLSGIYI).

Belongs to the YciB family.

Its subcellular location is the cell inner membrane. Plays a role in cell envelope biogenesis, maintenance of cell envelope integrity and membrane homeostasis. This is Inner membrane-spanning protein YciB from Shigella dysenteriae serotype 1 (strain Sd197).